Reading from the N-terminus, the 513-residue chain is ATP synthase subunit alpha (513 aa).

Residue 169–176 participates in ATP binding; it reads GDRQTGKT.

It belongs to the ATPase alpha/beta chains family. F-type ATPases have 2 components, CF(1) - the catalytic core - and CF(0) - the membrane proton channel. CF(1) has five subunits: alpha(3), beta(3), gamma(1), delta(1), epsilon(1). CF(0) has three main subunits: a(1), b(2) and c(9-12). The alpha and beta chains form an alternating ring which encloses part of the gamma chain. CF(1) is attached to CF(0) by a central stalk formed by the gamma and epsilon chains, while a peripheral stalk is formed by the delta and b chains.

Its subcellular location is the cell inner membrane. It carries out the reaction ATP + H2O + 4 H(+)(in) = ADP + phosphate + 5 H(+)(out). Its function is as follows. Produces ATP from ADP in the presence of a proton gradient across the membrane. The alpha chain is a regulatory subunit. This is ATP synthase subunit alpha from Haemophilus influenzae (strain PittGG).